The chain runs to 469 residues: Glutamate--tRNA ligase (469 aa).

A 'HIGH' region motif is present at residues 11–21 (PSPTGFIHLGN). The span at 116 to 131 (ASGEKPRYDGTWRPEP) shows a compositional bias: basic and acidic residues. Residues 116–139 (ASGEKPRYDGTWRPEPGKVLPTPP) are disordered. A 'KMSKS' region motif is present at residues 243-247 (KMSKR). Lys-246 serves as a coordination point for ATP.

It belongs to the class-I aminoacyl-tRNA synthetase family. Glutamate--tRNA ligase type 1 subfamily. Monomer.

It localises to the cytoplasm. The enzyme catalyses tRNA(Glu) + L-glutamate + ATP = L-glutamyl-tRNA(Glu) + AMP + diphosphate. In terms of biological role, catalyzes the attachment of glutamate to tRNA(Glu) in a two-step reaction: glutamate is first activated by ATP to form Glu-AMP and then transferred to the acceptor end of tRNA(Glu). In Paraburkholderia phymatum (strain DSM 17167 / CIP 108236 / LMG 21445 / STM815) (Burkholderia phymatum), this protein is Glutamate--tRNA ligase.